Here is a 307-residue protein sequence, read N- to C-terminus: Methionyl-tRNA formyltransferase (307 aa).

Residue 109–112 (SLLP) coordinates (6S)-5,6,7,8-tetrahydrofolate.

The protein belongs to the Fmt family.

The enzyme catalyses L-methionyl-tRNA(fMet) + (6R)-10-formyltetrahydrofolate = N-formyl-L-methionyl-tRNA(fMet) + (6S)-5,6,7,8-tetrahydrofolate + H(+). Its function is as follows. Attaches a formyl group to the free amino group of methionyl-tRNA(fMet). The formyl group appears to play a dual role in the initiator identity of N-formylmethionyl-tRNA by promoting its recognition by IF2 and preventing the misappropriation of this tRNA by the elongation apparatus. The sequence is that of Methionyl-tRNA formyltransferase from Dechloromonas aromatica (strain RCB).